Here is a 473-residue protein sequence, read N- to C-terminus: LETM1 domain-containing protein mdm28, mitochondrial (473 aa).

A mitochondrion-targeting transit peptide spans Met1–Tyr73. The Mitochondrial intermembrane portion of the chain corresponds to Ser74–Arg161. The chain crosses the membrane as a helical span at residues Leu162–Val182. The Mitochondrial matrix segment spans residues Lys183–Lys473. Residues Gln205–Asp398 form the Letm1 RBD domain. The segment at Glu430–Lys473 is disordered. Residues Glu434–Ala452 are compositionally biased toward basic and acidic residues. Polar residues predominate over residues Ser462–Lys473.

Its subcellular location is the mitochondrion inner membrane. Involved in mitochondrial potassium homeostasis through the mitochondrial K(+)/H(+) exchange regulation. The protein is LETM1 domain-containing protein mdm28, mitochondrial (mdm28) of Schizosaccharomyces pombe (strain 972 / ATCC 24843) (Fission yeast).